The following is a 328-amino-acid chain: MKFISNNNITDPTLNLAMEEYVLKNLPAEESYFLFYINRPSIIVGKNQNTIEEVNQTYIDAHNIDVVRRISGGGAVYHDTGNLNFSFITDDDGNSFHNFQKFTEPIVQALQSLGVNAELTGRNDIQVGQAKISGNAMVKVKNRMFSHGTLMLNSDLDEVQNALKVNPAKIKSKGIKSVRKRVANIQEFLNDPLEIEEFKKIILKTIFGETEVEEYKLTDEDWENIEKLSNDKYRTWAWNYGRNPKYNFEREEKFEKGFVQIKFDVKRGKIEHAKIFGDFFGVGDVTDLENALVGCLHDFEHIEEALSEYDLYHYFGDIDRHELIRLMS.

In terms of domain architecture, BPL/LPL catalytic spans 27–214 (PAEESYFLFY…TIFGETEVEE (188 aa)). ATP-binding positions include R69, 74–77 (GAVY), and K131. (R)-lipoate is bound at residue K131.

The enzyme catalyses L-lysyl-[lipoyl-carrier protein] + (R)-lipoate + ATP = N(6)-[(R)-lipoyl]-L-lysyl-[lipoyl-carrier protein] + AMP + diphosphate + H(+). Its pathway is protein modification; protein lipoylation via exogenous pathway; protein N(6)-(lipoyl)lysine from lipoate: step 1/2. It functions in the pathway protein modification; protein lipoylation via exogenous pathway; protein N(6)-(lipoyl)lysine from lipoate: step 2/2. Catalyzes the lipoylation of proteins, such as GcvH (SAV0833) and GcvH-L (SAV0324), likely via the ATP-dependent activation of lipoate to lipoyl-AMP and the transfer of the activated lipoyl onto the lipoyl domain of the target protein. The chain is Lipoate--protein ligase 1 from Staphylococcus aureus (strain Mu50 / ATCC 700699).